Reading from the N-terminus, the 353-residue chain is Small ribosomal subunit protein uS2 (353 aa).

The segment at 256-353 is disordered; that stretch reads DTDEQSSAAN…TPAESTDEQA (98 aa). 2 stretches are compositionally biased toward low complexity: residues 263–311 and 321–339; these read AANT…AEAP and ESAT…TPAE. Over residues 340–353 the composition is skewed to acidic residues; the sequence is AEAETPAESTDEQA.

This sequence belongs to the universal ribosomal protein uS2 family.

This Beutenbergia cavernae (strain ATCC BAA-8 / DSM 12333 / CCUG 43141 / JCM 11478 / NBRC 16432 / NCIMB 13614 / HKI 0122) protein is Small ribosomal subunit protein uS2.